Here is a 196-residue protein sequence, read N- to C-terminus: Putative 3-methyladenine DNA glycosylase (196 aa).

It belongs to the DNA glycosylase MPG family.

The polypeptide is Putative 3-methyladenine DNA glycosylase (Bacillus velezensis (strain DSM 23117 / BGSC 10A6 / LMG 26770 / FZB42) (Bacillus amyloliquefaciens subsp. plantarum)).